Here is a 191-residue protein sequence, read N- to C-terminus: Holliday junction branch migration complex subunit RuvA (191 aa).

Residues 1–64 (MIGRLTGTLA…EDAQLLYGFL (64 aa)) are domain I. The domain II stretch occupies residues 65–138 (TATERATFRQ…KGKLGPDLAL (74 aa)). Residues 138-142 (LPGAV) form a flexible linker region. The domain III stretch occupies residues 143–191 (IRNEAQSDIVQALIALGYNEREAAAAIKPLPADVGVSDGIKLALRALGK).

It belongs to the RuvA family. In terms of assembly, homotetramer. Forms an RuvA(8)-RuvB(12)-Holliday junction (HJ) complex. HJ DNA is sandwiched between 2 RuvA tetramers; dsDNA enters through RuvA and exits via RuvB. An RuvB hexamer assembles on each DNA strand where it exits the tetramer. Each RuvB hexamer is contacted by two RuvA subunits (via domain III) on 2 adjacent RuvB subunits; this complex drives branch migration. In the full resolvosome a probable DNA-RuvA(4)-RuvB(12)-RuvC(2) complex forms which resolves the HJ.

It localises to the cytoplasm. In terms of biological role, the RuvA-RuvB-RuvC complex processes Holliday junction (HJ) DNA during genetic recombination and DNA repair, while the RuvA-RuvB complex plays an important role in the rescue of blocked DNA replication forks via replication fork reversal (RFR). RuvA specifically binds to HJ cruciform DNA, conferring on it an open structure. The RuvB hexamer acts as an ATP-dependent pump, pulling dsDNA into and through the RuvAB complex. HJ branch migration allows RuvC to scan DNA until it finds its consensus sequence, where it cleaves and resolves the cruciform DNA. This chain is Holliday junction branch migration complex subunit RuvA, found in Leptothrix cholodnii (strain ATCC 51168 / LMG 8142 / SP-6) (Leptothrix discophora (strain SP-6)).